We begin with the raw amino-acid sequence, 303 residues long: Probable endonuclease 4 (303 aa).

9 residues coordinate Zn(2+): H75, H115, E151, D185, H188, H221, D234, H236, and E266.

The protein belongs to the AP endonuclease 2 family. Requires Zn(2+) as cofactor.

The enzyme catalyses Endonucleolytic cleavage to 5'-phosphooligonucleotide end-products.. Its function is as follows. Endonuclease IV plays a role in DNA repair. It cleaves phosphodiester bonds at apurinic or apyrimidinic (AP) sites, generating a 3'-hydroxyl group and a 5'-terminal sugar phosphate. The polypeptide is Probable endonuclease 4 (Ureaplasma parvum serovar 3 (strain ATCC 700970)).